Consider the following 357-residue polypeptide: Holliday junction branch migration complex subunit RuvB (357 aa).

Residues 4–195 form a large ATPase domain (RuvB-L) region; the sequence is TDKLAAKAVS…FGIVARLEFY (192 aa). Residues Leu-34, Arg-35, Gly-76, Lys-79, Thr-80, Thr-81, 142–144, Arg-185, Tyr-195, and Arg-232 each bind ATP; that span reads EDY. Thr-80 lines the Mg(2+) pocket. The interval 196 to 266 is small ATPAse domain (RuvB-S); sequence TPAELAKIVT…VADAALAMLD (71 aa). Positions 269–357 are head domain (RuvB-H); it reads AVGFDLMDRK…PVRDLWDDNQ (89 aa). DNA is bound by residues Arg-305, Arg-324, and Arg-329.

It belongs to the RuvB family. In terms of assembly, homohexamer. Forms an RuvA(8)-RuvB(12)-Holliday junction (HJ) complex. HJ DNA is sandwiched between 2 RuvA tetramers; dsDNA enters through RuvA and exits via RuvB. An RuvB hexamer assembles on each DNA strand where it exits the tetramer. Each RuvB hexamer is contacted by two RuvA subunits (via domain III) on 2 adjacent RuvB subunits; this complex drives branch migration. In the full resolvosome a probable DNA-RuvA(4)-RuvB(12)-RuvC(2) complex forms which resolves the HJ.

It is found in the cytoplasm. It carries out the reaction ATP + H2O = ADP + phosphate + H(+). Its function is as follows. The RuvA-RuvB-RuvC complex processes Holliday junction (HJ) DNA during genetic recombination and DNA repair, while the RuvA-RuvB complex plays an important role in the rescue of blocked DNA replication forks via replication fork reversal (RFR). RuvA specifically binds to HJ cruciform DNA, conferring on it an open structure. The RuvB hexamer acts as an ATP-dependent pump, pulling dsDNA into and through the RuvAB complex. RuvB forms 2 homohexamers on either side of HJ DNA bound by 1 or 2 RuvA tetramers; 4 subunits per hexamer contact DNA at a time. Coordinated motions by a converter formed by DNA-disengaged RuvB subunits stimulates ATP hydrolysis and nucleotide exchange. Immobilization of the converter enables RuvB to convert the ATP-contained energy into a lever motion, pulling 2 nucleotides of DNA out of the RuvA tetramer per ATP hydrolyzed, thus driving DNA branch migration. The RuvB motors rotate together with the DNA substrate, which together with the progressing nucleotide cycle form the mechanistic basis for DNA recombination by continuous HJ branch migration. Branch migration allows RuvC to scan DNA until it finds its consensus sequence, where it cleaves and resolves cruciform DNA. The protein is Holliday junction branch migration complex subunit RuvB of Ralstonia pickettii (strain 12J).